The primary structure comprises 1378 residues: Roundabout homolog 2 (1378 aa).

The first 21 residues, 1–21 (MSLLMFTQLLLCGFLYVRVDG), serve as a signal peptide directing secretion. Residues 22-859 (SRLRQEDFPP…EQITDVVKQP (838 aa)) are Extracellular-facing. Ig-like C2-type domains lie at 31-127 (PRIV…ASLE), 133-220 (DDFR…AELT), 225-309 (PTFL…ATLT), 314-409 (PQFV…LEVT), and 418-504 (PIIL…AVLD). A disulfide bridge links C52 with C110. A glycan (N-linked (GlcNAc...) asparagine) is linked at N123. 3 cysteine pairs are disulfide-bonded: C154–C203, C246–C293, and C335–C391. N-linked (GlcNAc...) asparagine glycosylation is present at N426. The cysteines at positions 439 and 488 are disulfide-linked. Fibronectin type-III domains lie at 524 to 618 (PPSK…TQDI), 637 to 735 (VLVR…TEEA), and 739 to 836 (PPQS…IGRR). Residues 603-625 (LSDPSPMSDPVRTQDISPPAQGV) form a disordered region. N-linked (GlcNAc...) asparagine glycosylation is found at N752, N782, N789, and N845. The helical transmembrane segment at 860–880 (AFIAGIGGACWVILMGFSIWL) threads the bilayer. Residues 881-1378 (YWRRKKRKGL…NSQGQFTGEL (498 aa)) lie on the Cytoplasmic side of the membrane. Disordered stretches follow at residues 1032-1084 (GFGY…PLPG), 1124-1156 (EDDD…LTPS), and 1215-1348 (DVAD…KTEV). Over residues 1058–1067 (SSKPQKNNGS) the composition is skewed to low complexity. The segment covering 1141–1155 (PAISFGQQSTATLTP) has biased composition (polar residues). T1154 is subject to Phosphothreonine. Residue S1156 is modified to Phosphoserine. Acidic residues predominate over residues 1215–1228 (DVADDDADDEEEAL). A compositionally biased stretch (polar residues) spans 1240–1285 (TPGSSMDNLDSSVTGKAFTSSQRPRPTSPFSTDSNTSAALSQSQRP). Residues 1319–1343 (SKPSFPSPGGHSSSGTASSKGSTGP) are compositionally biased toward low complexity.

This sequence belongs to the immunoglobulin superfamily. ROBO family. As to quaternary structure, interacts with SLIT2.

It localises to the membrane. Functionally, receptor for SLIT2, and probably SLIT1, which are thought to act as molecular guidance cue in cellular migration, including axonal navigation at the ventral midline of the neural tube and projection of axons to different regions during neuronal development. This is Roundabout homolog 2 (ROBO2) from Homo sapiens (Human).